The chain runs to 272 residues: 27-O-demethylrifamycin SV methyltransferase (272 aa).

Residues Ser-89, Gln-94, 117–118 (DA), Leu-134, and His-139 each bind S-adenosyl-L-methionine.

The protein belongs to the class I-like SAM-binding methyltransferase superfamily. In terms of assembly, exists probably as a trimer.

It carries out the reaction 27-O-demethylrifamycin SV + S-adenosyl-L-methionine = rifamycin SV + S-adenosyl-L-homocysteine + H(+). Its pathway is antibiotic biosynthesis; rifamycin B biosynthesis. Its activity is regulated as follows. Slightly inhibited by Ca(2+) and Mg(2+). Strongly inhibited by Zn(2+), Ni(2+) and Co(2+). Catalyzes the methylation of 27-O-demethylrifamycin SV (DMRSV) to rifamycin SV. The chain is 27-O-demethylrifamycin SV methyltransferase from Amycolatopsis mediterranei (strain S699) (Nocardia mediterranei).